Reading from the N-terminus, the 331-residue chain is Ketol-acid reductoisomerase (NADP(+)) (331 aa).

One can recognise a KARI N-terminal Rossmann domain in the interval alanine 2–threonine 182. NADP(+) is bound by residues tyrosine 25–glutamine 28, serine 51, serine 53, and aspartate 83–glutamine 86. Histidine 108 is an active-site residue. Glycine 134 is an NADP(+) binding site. The KARI C-terminal knotted domain maps to asparagine 183–leucine 328. 4 residues coordinate Mg(2+): aspartate 191, glutamate 195, glutamate 227, and glutamate 231. Serine 252 lines the substrate pocket.

The protein belongs to the ketol-acid reductoisomerase family. Requires Mg(2+) as cofactor.

It catalyses the reaction (2R)-2,3-dihydroxy-3-methylbutanoate + NADP(+) = (2S)-2-acetolactate + NADPH + H(+). The enzyme catalyses (2R,3R)-2,3-dihydroxy-3-methylpentanoate + NADP(+) = (S)-2-ethyl-2-hydroxy-3-oxobutanoate + NADPH + H(+). It functions in the pathway amino-acid biosynthesis; L-isoleucine biosynthesis; L-isoleucine from 2-oxobutanoate: step 2/4. It participates in amino-acid biosynthesis; L-valine biosynthesis; L-valine from pyruvate: step 2/4. Its function is as follows. Involved in the biosynthesis of branched-chain amino acids (BCAA). Catalyzes an alkyl-migration followed by a ketol-acid reduction of (S)-2-acetolactate (S2AL) to yield (R)-2,3-dihydroxy-isovalerate. In the isomerase reaction, S2AL is rearranged via a Mg-dependent methyl migration to produce 3-hydroxy-3-methyl-2-ketobutyrate (HMKB). In the reductase reaction, this 2-ketoacid undergoes a metal-dependent reduction by NADPH to yield (R)-2,3-dihydroxy-isovalerate. The protein is Ketol-acid reductoisomerase (NADP(+)) of Synechococcus sp. (strain CC9902).